Consider the following 308-residue polypeptide: Putative proline iminopeptidase (308 aa).

In terms of domain architecture, AB hydrolase-1 spans 30–290 (KPVLYIHGGP…LYVTNNAGHS (261 aa)). The active-site Nucleophile is Ser-105. Asp-261 is a catalytic residue. His-289 acts as the Proton donor in catalysis.

This sequence belongs to the peptidase S33 family.

The protein resides in the cytoplasm. It carries out the reaction Release of N-terminal proline from a peptide.. Specifically catalyzes the removal of N-terminal proline residues from peptides. The chain is Putative proline iminopeptidase (pip) from Mycoplasma genitalium (strain ATCC 33530 / DSM 19775 / NCTC 10195 / G37) (Mycoplasmoides genitalium).